A 558-amino-acid chain; its full sequence is Glucose-6-phosphate isomerase (558 aa).

Residue alanine 2 is modified to N-acetylalanine. Lysine 12 carries the post-translational modification N6-acetyllysine. At lysine 34 the chain carries N6-(2-hydroxyisobutyryl)lysine. Serine 107 carries the post-translational modification Phosphoserine. Threonine 109 carries the phosphothreonine modification. Lysine 142 carries the post-translational modification N6-acetyllysine. Glycine 159 to serine 160 is a D-glucose 6-phosphate binding site. Phosphoserine; by CK2 is present on serine 185. Serine 210 to threonine 215 contributes to the D-glucose 6-phosphate binding site. Threonine 250 is modified (phosphothreonine). Positions 354, 358, and 389 each coordinate D-glucose 6-phosphate. The active-site Proton donor is the glutamate 358. Histidine 389 is an active-site residue. An N6-acetyllysine; alternate modification is found at lysine 454. Lysine 454 carries the N6-malonyllysine; alternate modification. N6-succinyllysine; alternate is present on lysine 454. Residue serine 455 is modified to Phosphoserine. Residue lysine 519 participates in D-glucose 6-phosphate binding. Lysine 519 is a catalytic residue.

Belongs to the GPI family. Homodimer; in the catalytically active form. Monomer in the secreted form. In terms of processing, phosphorylation at Ser-185 by CK2 has been shown to decrease enzymatic activity and may contribute to secretion by a non-classical secretory pathway. Post-translationally, ISGylated.

The protein resides in the cytoplasm. Its subcellular location is the secreted. It carries out the reaction alpha-D-glucose 6-phosphate = beta-D-fructose 6-phosphate. Its pathway is carbohydrate degradation; glycolysis; D-glyceraldehyde 3-phosphate and glycerone phosphate from D-glucose: step 2/4. Functionally, in the cytoplasm, catalyzes the conversion of glucose-6-phosphate to fructose-6-phosphate, the second step in glycolysis, and the reverse reaction during gluconeogenesis. Besides it's role as a glycolytic enzyme, also acts as a secreted cytokine: acts as an angiogenic factor (AMF) that stimulates endothelial cell motility. Acts as a neurotrophic factor, neuroleukin, for spinal and sensory neurons. It is secreted by lectin-stimulated T-cells and induces immunoglobulin secretion. This Macaca fascicularis (Crab-eating macaque) protein is Glucose-6-phosphate isomerase.